Here is a 233-residue protein sequence, read N- to C-terminus: MKKPIIEFHNVSKKFGNKLPINNVSFTVKKNNITTLIGPNGAGKTTIVRLMLGLEKPTSGEIIIDPRLKIGYVPQKFNLSSDLPITVKKFLDLLAPNNLTNDIKEIHSFIDLERLKDQKISTLSGGQFQKIVLASSLLSKPDLIILDEPLQSLDVTSQQEFYQLISLIRKKLDITVFMISHDLFTVIKNSDQVICLNGHICCTGTPNAITPNSDFSNALSSLGFYTHHHDHKH.

Residues 6 to 222 (IEFHNVSKKF…SDFSNALSSL (217 aa)) form the ABC transporter domain. 38-45 (GPNGAGKT) provides a ligand contact to ATP.

This sequence belongs to the ABC transporter superfamily. Zinc importer (TC 3.A.1.15.5) family. The complex is composed of two ATP-binding proteins (ZnuC), two transmembrane proteins (ZnuB) and a solute-binding protein (ZnuA).

The protein localises to the cell inner membrane. It carries out the reaction Zn(2+)(out) + ATP(in) + H2O(in) = Zn(2+)(in) + ADP(in) + phosphate(in) + H(+)(in). Part of the ABC transporter complex ZnuABC involved in zinc import. Responsible for energy coupling to the transport system. The chain is Zinc import ATP-binding protein ZnuC from Rickettsia bellii (strain RML369-C).